The following is a 249-amino-acid chain: Anti-H(O) lectin 2 (249 aa).

N-linked (GlcNAc...) asparagine glycosylation occurs at Asn118. 2 residues coordinate Mn(2+): Glu130 and Asp132. Ca(2+)-binding residues include Asp132, Tyr134, Asn140, and Asp145. Mn(2+)-binding residues include Asp145 and His148. N-linked (GlcNAc...) asparagine glycosylation is present at Asn245.

This sequence belongs to the leguminous lectin family.

Di-N-acetylchitobiose specific lectin. The protein is Anti-H(O) lectin 2 of Ulex europaeus (Furze).